A 632-amino-acid chain; its full sequence is MGKIIGIDLGTTNSCVAVMEGNEPVVIANSEGKRTTPSVVAFLNEGQGERKVGDAAKRQAIINPQNTISSIKRFMGKRYSDIAEESKLVPYQLEKGNNDTVRVRIGDRTYTPQEISAMILQKMKTTAEDYLGTTVKEAVITVPAYFNDAERQATKEAGQIAGLEVKRIINEPTAAALAYGLDKKNQDMKIAVFDLGGGTFDISILELGDGVFEVKSTNGDVHLGGDNFDQKLIDWLAEEFKKEESVDLRKDPTALQRLKEAAEKAKIELSGSSTTEVNLPYITAIDGVPKHLVKKITRAQFEQLVDGLVRRTLEPCKKAMQDAGLTVADIDEVILVGGSTRIPKIQEEVEKFFNKKPSKGVNPDEVVAVGAAIQGGVLTGEVKDVLLLDVIPLSFGIETLGGVYTKLIEANTTIPTKKSEVFSTAADSQSSVEIHVLQGERAMARDNRTIGKFHLDGIPPAPRGIPQIEVTFDIDANGILNVSAKDKGTGKEQKIRIEASSGLTDEEIKKMKQEAEANAEADKQEREKVDKLNTADATIFQAQKQLQELGDKIPADTKKSAEDAIEELKKAHEAKDIAAIDTAMSKVNAALQQLYAAAQQAGQAEGQAAQEPSQSTGNAQAEATDAEYEEVK.

Phosphothreonine; by autocatalysis is present on T199. A compositionally biased stretch (low complexity) spans 597–611 (AAQQAGQAEGQAAQE). A disordered region spans residues 597-632 (AAQQAGQAEGQAAQEPSQSTGNAQAEATDAEYEEVK). Over residues 612–621 (PSQSTGNAQA) the composition is skewed to polar residues.

This sequence belongs to the heat shock protein 70 family.

Acts as a chaperone. This Amoebophilus asiaticus (strain 5a2) protein is Chaperone protein DnaK.